The following is a 568-amino-acid chain: Estrogen receptor beta-1 (568 aa).

The modulating stretch occupies residues 12–169 (SEYAEGDSSL…SLRGKADMHY (158 aa)). NR C4-type zinc fingers lie at residues 170–190 (CAVCSDYASGYHYGVWSCEGC) and 206–230 (CPATNQCTIDKNRRKSCQACRLRKC). A DNA-binding region (nuclear receptor) is located at residues 170–235 (CAVCSDYASG…RLRKCYEVGM (66 aa)). Positions 292–528 (SPEELIARIM…DLLLEMLDAH (237 aa)) constitute an NR LBD domain.

It belongs to the nuclear hormone receptor family. NR3 subfamily. Binds DNA as a homodimer. Can form a heterodimer with ER-alpha.

The protein localises to the nucleus. Its function is as follows. Binds estrogens with an affinity similar to that of ER-alpha, and activates expression of reporter genes containing estrogen response elements (ERE) in an estrogen-dependent manner. The chain is Estrogen receptor beta-1 (esr2a) from Carassius auratus (Goldfish).